A 407-amino-acid chain; its full sequence is MTVRGAALAPDPASPTTAAASPSISVIPEGSPTAMEQPVFLMTTAAQAISGFFVWTALLITCHQIYMHLRCYSCPNEQRYIVRILFIVPIYAFDSWLSLLFFTNDQYYVYFGTVRDCYEALVIYNFLSLCYEYLGGESSIMSEIRGKPIESSCMYGTCCLWGKTYSIGFLRFCKQATLQFCVVKPLMAVSTVVLQAFGKYRDGDFDVTSGYLYVTIIYNISVSLALYALFLFYFATRELLSPYSPVLKFFMVKSVIFLSFWQGMLLAILEKCGAIPKIHSARVSVGEGTVAAGYQDFIICVEMFFAALALRHAFTYKVYADKRVDAQGRCAPMKSISSSLKETMNPHDIVQDAIHNFSPAYQQYTQQSTLEPGPTWRGGAHGLSRSHSLSGARDNEKTLLLSSDDEF.

The interval 1–24 is disordered; sequence MTVRGAALAPDPASPTTAAASPSI. Transmembrane regions (helical) follow at residues 40–60, 84–104, 121–141, 178–198, 214–234, 249–269, and 290–310; these read FLMT…ALLI, ILFI…FFTN, LVIY…SSIM, LQFC…QAFG, VTII…LFYF, FFMV…LAIL, and VAAG…ALAL. The disordered stretch occupies residues 369-395; that stretch reads TLEPGPTWRGGAHGLSRSHSLSGARDN. A phosphoserine mark is found at Ser-388, Ser-402, and Ser-403.

The protein belongs to the TMEM184 family.

The protein resides in the membrane. May activate the MAP kinase signaling pathway. The polypeptide is Transmembrane protein 184B (TMEM184B) (Bos taurus (Bovine)).